Consider the following 379-residue polypeptide: UDP-4-amino-4-deoxy-L-arabinose--oxoglutarate aminotransferase (379 aa).

Lys182 is modified (N6-(pyridoxal phosphate)lysine).

The protein belongs to the DegT/DnrJ/EryC1 family. ArnB subfamily. Homodimer. The cofactor is pyridoxal 5'-phosphate.

The enzyme catalyses UDP-4-amino-4-deoxy-beta-L-arabinose + 2-oxoglutarate = UDP-beta-L-threo-pentopyranos-4-ulose + L-glutamate. It functions in the pathway nucleotide-sugar biosynthesis; UDP-4-deoxy-4-formamido-beta-L-arabinose biosynthesis; UDP-4-deoxy-4-formamido-beta-L-arabinose from UDP-alpha-D-glucuronate: step 2/3. Its pathway is bacterial outer membrane biogenesis; lipopolysaccharide biosynthesis. In terms of biological role, catalyzes the conversion of UDP-4-keto-arabinose (UDP-Ara4O) to UDP-4-amino-4-deoxy-L-arabinose (UDP-L-Ara4N). The modified arabinose is attached to lipid A and is required for resistance to polymyxin and cationic antimicrobial peptides. The polypeptide is UDP-4-amino-4-deoxy-L-arabinose--oxoglutarate aminotransferase (Klebsiella pneumoniae (strain 342)).